We begin with the raw amino-acid sequence, 409 residues long: N-carbamoyl-L-amino acid amidohydrolase (409 aa).

A divalent metal cation is bound by residues His79, Asp90, Glu125, and His189. Positions 192, 225, 273, 286, and 355 each coordinate an N-carbamoyl-L-alpha-amino acid. Positions 208–325 (GIAGLIWVKF…TTERLQEMAP (118 aa)) are involved in dimerization. Residue His380 participates in a divalent metal cation binding.

Belongs to the peptidase M20 family. As to quaternary structure, homodimer. Mn(2+) serves as cofactor. Requires Ni(2+) as cofactor. Co(2+) is required as a cofactor. The cofactor is Fe(2+).

It catalyses the reaction an N-carbamoyl-L-alpha-amino acid + H2O + 2 H(+) = an L-alpha-amino acid + NH4(+) + CO2. It carries out the reaction N-carbamoyl-L-methionine + H2O + 2 H(+) = L-methionine + NH4(+) + CO2. The enzyme catalyses N-acetyl-L-methionine + H2O = L-methionine + acetate. The catalysed reaction is N-carbamoyl-L-alanine + H2O + 2 H(+) = L-alanine + NH4(+) + CO2. It catalyses the reaction N-carbamoyl-L-glutamate + H2O + 2 H(+) = L-glutamate + NH4(+) + CO2. It carries out the reaction N-carbamoylglycine + H2O + 2 H(+) = glycine + NH4(+) + CO2. The enzyme catalyses N-carbamoyl-L-leucine + H2O + 2 H(+) = L-leucine + NH4(+) + CO2. Its function is as follows. Catalyzes the hydrolysis of aliphatic N-carbamoyl-L-alpha-amino acids to free L-alpha-amino acids. Is strictly L-specific since it is inactive toward N-carbamoyl-D-alpha-amino acids. Is not able to use aromatic N-carbamoyl-L-alpha-amino acids like N-carbamoyl-L-tryptophan and N-carbamoyl-L-phenylalanine as substrates, but is also able to hydrolyze N-acetyl-L-methionine. This Geobacillus stearothermophilus (Bacillus stearothermophilus) protein is N-carbamoyl-L-amino acid amidohydrolase.